The chain runs to 528 residues: Lanosterol 14-alpha demethylase (528 aa).

Heme is bound at residue Cys-470.

The protein belongs to the cytochrome P450 family. The cofactor is heme.

It is found in the membrane. The enzyme catalyses a 14alpha-methyl steroid + 3 reduced [NADPH--hemoprotein reductase] + 3 O2 = a Delta(14) steroid + formate + 3 oxidized [NADPH--hemoprotein reductase] + 4 H2O + 4 H(+). It carries out the reaction a 14alpha-methyl steroid + reduced [NADPH--hemoprotein reductase] + O2 = a 14alpha-hydroxymethyl steroid + oxidized [NADPH--hemoprotein reductase] + H2O + H(+). It catalyses the reaction a 14alpha-hydroxymethyl steroid + reduced [NADPH--hemoprotein reductase] + O2 = a 14alpha-formyl steroid + oxidized [NADPH--hemoprotein reductase] + 2 H2O + H(+). The catalysed reaction is a 14alpha-formyl steroid + reduced [NADPH--hemoprotein reductase] + O2 = a Delta(14) steroid + formate + oxidized [NADPH--hemoprotein reductase] + H2O + 2 H(+). The enzyme catalyses lanosterol + 3 reduced [NADPH--hemoprotein reductase] + 3 O2 = 4,4-dimethyl-5alpha-cholesta-8,14,24-trien-3beta-ol + formate + 3 oxidized [NADPH--hemoprotein reductase] + 4 H2O + 4 H(+). It carries out the reaction lanosterol + reduced [NADPH--hemoprotein reductase] + O2 = 32-hydroxylanosterol + oxidized [NADPH--hemoprotein reductase] + H2O + H(+). It catalyses the reaction 32-hydroxylanosterol + reduced [NADPH--hemoprotein reductase] + O2 = 32-oxolanosterol + oxidized [NADPH--hemoprotein reductase] + 2 H2O + H(+). The catalysed reaction is 32-oxolanosterol + reduced [NADPH--hemoprotein reductase] + O2 = 4,4-dimethyl-5alpha-cholesta-8,14,24-trien-3beta-ol + formate + oxidized [NADPH--hemoprotein reductase] + H2O + 2 H(+). The enzyme catalyses eburicol + 3 reduced [NADPH--hemoprotein reductase] + 3 O2 = 14-demethyleburicol + formate + 3 oxidized [NADPH--hemoprotein reductase] + 4 H2O + 4 H(+). It carries out the reaction eburicol + reduced [NADPH--hemoprotein reductase] + O2 = 32-hydroxyeburicol + oxidized [NADPH--hemoprotein reductase] + H2O + H(+). It catalyses the reaction 32-hydroxyeburicol + reduced [NADPH--hemoprotein reductase] + O2 = 32-oxoeburicol + oxidized [NADPH--hemoprotein reductase] + 2 H2O + H(+). The catalysed reaction is 32-oxoeburicol + reduced [NADPH--hemoprotein reductase] + O2 = 14-demethyleburicol + formate + oxidized [NADPH--hemoprotein reductase] + H2O + 2 H(+). Its pathway is steroid biosynthesis; zymosterol biosynthesis; zymosterol from lanosterol: step 1/6. In terms of biological role, sterol 14alpha-demethylase that plays a critical role in the third module of ergosterol biosynthesis pathway, being ergosterol the major sterol component in fungal membranes that participates in a variety of functions. The third module or late pathway involves the ergosterol synthesis itself through consecutive reactions that mainly occur in the endoplasmic reticulum (ER) membrane. In filamentous fungi, during the initial step of this module, lanosterol (lanosta-8,24-dien-3beta-ol) can be metabolized to eburicol. Sterol 14alpha-demethylase catalyzes the three-step oxidative removal of the 14alpha-methyl group (C-32) of both these sterols in the form of formate, and converts eburicol and lanosterol to 14-demethyleburicol (4,4,24-trimethylergosta-8,14,24(28)-trienol) and 4,4-dimethyl-5alpha-cholesta-8,14,24-trien-3beta-ol, respectively, which are further metabolized by other enzymes in the pathway to ergosterol. Can also use substrates not intrinsic to fungi, such as 24,25-dihydrolanosterol (DHL), producing 4,4-dimethyl-8,14-cholestadien-3-beta-ol, but at lower rates than the endogenous substrates. In Candida tropicalis (Yeast), this protein is Lanosterol 14-alpha demethylase (ERG11).